The chain runs to 148 residues: Urease accessory protein UreE (148 aa).

The protein belongs to the UreE family.

It is found in the cytoplasm. Its function is as follows. Involved in urease metallocenter assembly. Binds nickel. Probably functions as a nickel donor during metallocenter assembly. The protein is Urease accessory protein UreE of Bacillus sp. (strain TB-90).